Consider the following 191-residue polypeptide: Glutathione-dependent formaldehyde-activating enzyme (191 aa).

The CENP-V/GFA domain occupies 22-169; that stretch reads FQGGTLECHC…LTELGLPPYD (148 aa). Positions 29, 31, 50, 52, 55, 97, and 100 each coordinate Zn(2+).

The protein belongs to the Gfa family. Zn(2+) serves as cofactor.

The enzyme catalyses S-(hydroxymethyl)glutathione = glutathione + formaldehyde. The protein operates within one-carbon metabolism; formaldehyde degradation; formate from formaldehyde (glutathione route): step 1/3. Catalyzes the condensation of formaldehyde and glutathione to S-hydroxymethylglutathione. This Xanthomonas axonopodis pv. citri (strain 306) protein is Glutathione-dependent formaldehyde-activating enzyme.